A 133-amino-acid polypeptide reads, in one-letter code: Small ribosomal subunit protein uS8 (133 aa).

The protein belongs to the universal ribosomal protein uS8 family. In terms of assembly, part of the 30S ribosomal subunit. Contacts proteins S5 and S12.

In terms of biological role, one of the primary rRNA binding proteins, it binds directly to 16S rRNA central domain where it helps coordinate assembly of the platform of the 30S subunit. The protein is Small ribosomal subunit protein uS8 of Prochlorococcus marinus (strain SARG / CCMP1375 / SS120).